We begin with the raw amino-acid sequence, 233 residues long: Orotidine 5'-phosphate decarboxylase (233 aa).

Substrate-binding positions include aspartate 9, lysine 31, aspartate 58 to threonine 67, threonine 120, arginine 182, glutamine 191, glycine 211, and arginine 212. The Proton donor role is filled by lysine 60.

Belongs to the OMP decarboxylase family. Type 1 subfamily. As to quaternary structure, homodimer.

The catalysed reaction is orotidine 5'-phosphate + H(+) = UMP + CO2. The protein operates within pyrimidine metabolism; UMP biosynthesis via de novo pathway; UMP from orotate: step 2/2. Its function is as follows. Catalyzes the decarboxylation of orotidine 5'-monophosphate (OMP) to uridine 5'-monophosphate (UMP). This is Orotidine 5'-phosphate decarboxylase from Listeria monocytogenes serotype 4b (strain CLIP80459).